The primary structure comprises 401 residues: Beta-ketoadipyl-CoA thiolase (401 aa).

The Acyl-thioester intermediate role is filled by Cys-91. Catalysis depends on proton acceptor residues His-357 and Cys-387.

The protein belongs to the thiolase-like superfamily. Thiolase family.

It catalyses the reaction succinyl-CoA + acetyl-CoA = 3-oxoadipyl-CoA + CoA. It participates in aromatic compound metabolism; beta-ketoadipate pathway; acetyl-CoA and succinyl-CoA from 3-oxoadipate: step 2/2. Its function is as follows. Catalyzes thiolytic cleavage of beta-ketoadipyl-CoA to succinyl-CoA and acetyl-CoA. The protein is Beta-ketoadipyl-CoA thiolase (pcaF) of Pseudomonas aeruginosa (strain ATCC 15692 / DSM 22644 / CIP 104116 / JCM 14847 / LMG 12228 / 1C / PRS 101 / PAO1).